We begin with the raw amino-acid sequence, 484 residues long: Sulfoacetaldehyde dehydrogenase (484 aa).

Residues 105-110 (LTPVTN), Gly-188, and Gly-206 each bind NAD(+). Cys-239 serves as the catalytic Nucleophile. Positions 332 and 412 each coordinate NAD(+).

It belongs to the aldehyde dehydrogenase family.

The catalysed reaction is sulfoacetaldehyde + NAD(+) + CoA = sulfoacetyl-CoA + NADH + H(+). In terms of biological role, part of a variant of the sulfo-TK pathway, a D-sulfoquinovose degradation pathway that produces sulfoacetate. Catalyzes the oxidation of sulfoacetaldehyde (SA) to sulfoacetyl-coenzyme A (sulfoacetyl-CoA). Is highly specific for NAD(+), with only residual (1%) activity with NADP(+). Cannot use acetaldehyde. This chain is Sulfoacetaldehyde dehydrogenase, found in Acholeplasma sp.